The chain runs to 431 residues: Shaggy-related protein kinase beta (431 aa).

Polar residues predominate over residues 12–24 (SGRNFVSSDNVGE). Residues 12 to 65 (SGRNFVSSDNVGETETPRSKPNQNREETESTETTSYEKDSVSSSENSDHLPKEI) are disordered. Composition is skewed to basic and acidic residues over residues 26–39 (ETPR…REET) and 46–65 (SYEK…PKEI). Positions 102-386 (YRAEHVIGTG…ALEACAHPFF (285 aa)) constitute a Protein kinase domain. ATP contacts are provided by residues 108-116 (IGTGSFGVV) and K131. D227 functions as the Proton acceptor in the catalytic mechanism. Y262 carries the phosphotyrosine modification.

This sequence belongs to the protein kinase superfamily. CMGC Ser/Thr protein kinase family. GSK-3 subfamily. Post-translationally, autophosphorylated mainly on threonine and serine residues.

The enzyme catalyses L-seryl-[protein] + ATP = O-phospho-L-seryl-[protein] + ADP + H(+). It catalyses the reaction L-threonyl-[protein] + ATP = O-phospho-L-threonyl-[protein] + ADP + H(+). Its function is as follows. May mediate extracellular signals to regulate transcription in differentiating cells. This is Shaggy-related protein kinase beta from Arabidopsis thaliana (Mouse-ear cress).